Here is a 160-residue protein sequence, read N- to C-terminus: Nascent polypeptide-associated complex subunit beta (160 aa).

Disordered regions lie at residues 16 to 36 and 118 to 160; these read GGKGTPRRKVKKVHKSSGTDD and ESYQ…TEVE. Over residues 20-30 the composition is skewed to basic residues; it reads TPRRKVKKVHK. Residues 33–98 enclose the NAC-A/B domain; the sequence is GTDDKKLQTA…GEDKELTELV (66 aa). The segment covering 124 to 134 has biased composition (basic and acidic residues); that stretch reads QKEKGEDGDKK. Residues 135-145 show a composition bias toward acidic residues; the sequence is DDDDEDDDDIP.

This sequence belongs to the NAC-beta family. Part of the nascent polypeptide-associated complex (NAC), consisting of EGD2 and EGD1. NAC associates with ribosomes via EGD1.

It localises to the cytoplasm. The protein resides in the nucleus. Functionally, component of the nascent polypeptide-associated complex (NAC), a dynamic component of the ribosomal exit tunnel, protecting the emerging polypeptides from interaction with other cytoplasmic proteins to ensure appropriate nascent protein targeting. The NAC complex also promotes mitochondrial protein import by enhancing productive ribosome interactions with the outer mitochondrial membrane and blocks the inappropriate interaction of ribosomes translating non-secretory nascent polypeptides with translocation sites in the membrane of the endoplasmic reticulum. EGD1 may act as a transcription factor that exert a negative effect on the expression of several genes that are transcribed by RNA polymerase II. This chain is Nascent polypeptide-associated complex subunit beta (EGD1), found in Phaeosphaeria nodorum (strain SN15 / ATCC MYA-4574 / FGSC 10173) (Glume blotch fungus).